Reading from the N-terminus, the 230-residue chain is Large ribosomal subunit protein uL1 (230 aa).

The protein belongs to the universal ribosomal protein uL1 family. In terms of assembly, part of the 50S ribosomal subunit.

Its function is as follows. Binds directly to 23S rRNA. The L1 stalk is quite mobile in the ribosome, and is involved in E site tRNA release. Functionally, protein L1 is also a translational repressor protein, it controls the translation of the L11 operon by binding to its mRNA. The polypeptide is Large ribosomal subunit protein uL1 (Staphylococcus aureus (strain Mu3 / ATCC 700698)).